The chain runs to 277 residues: Shikimate dehydrogenase (NADP(+)) (277 aa).

Shikimate contacts are provided by residues 15 to 17 (SLS) and T62. The active-site Proton acceptor is K66. Positions 87 and 102 each coordinate shikimate. Residues 127 to 131 (GAGGA), 151 to 156 (NRTRDK), and I219 each bind NADP(+). Y221 serves as a coordination point for shikimate. G242 is a binding site for NADP(+).

It belongs to the shikimate dehydrogenase family. As to quaternary structure, homodimer.

The catalysed reaction is shikimate + NADP(+) = 3-dehydroshikimate + NADPH + H(+). Its pathway is metabolic intermediate biosynthesis; chorismate biosynthesis; chorismate from D-erythrose 4-phosphate and phosphoenolpyruvate: step 4/7. Its function is as follows. Involved in the biosynthesis of the chorismate, which leads to the biosynthesis of aromatic amino acids. Catalyzes the reversible NADPH linked reduction of 3-dehydroshikimate (DHSA) to yield shikimate (SA). This Bacillus mycoides (strain KBAB4) (Bacillus weihenstephanensis) protein is Shikimate dehydrogenase (NADP(+)).